Reading from the N-terminus, the 146-residue chain is Anti-sigma F factor (146 aa).

It belongs to the anti-sigma-factor family.

It catalyses the reaction L-seryl-[protein] + ATP = O-phospho-L-seryl-[protein] + ADP + H(+). It carries out the reaction L-threonyl-[protein] + ATP = O-phospho-L-threonyl-[protein] + ADP + H(+). Binds to sigma F and blocks its ability to form an RNA polymerase holoenzyme (E-sigma F). Phosphorylates SpoIIAA on a serine residue. This phosphorylation may enable SpoIIAA to act as an anti-anti-sigma factor that counteracts SpoIIAB and thus releases sigma F from inhibition. The sequence is that of Anti-sigma F factor from Shouchella clausii (strain KSM-K16) (Alkalihalobacillus clausii).